The sequence spans 186 residues: Ribosome-recycling factor (186 aa).

This sequence belongs to the RRF family.

It localises to the cytoplasm. Its function is as follows. Responsible for the release of ribosomes from messenger RNA at the termination of protein biosynthesis. May increase the efficiency of translation by recycling ribosomes from one round of translation to another. This chain is Ribosome-recycling factor, found in Rickettsia bellii (strain OSU 85-389).